The primary structure comprises 186 residues: Peptidyl-tRNA hydrolase (186 aa).

Tyrosine 14 lines the tRNA pocket. Histidine 19 functions as the Proton acceptor in the catalytic mechanism. Residues tyrosine 64, asparagine 66, and asparagine 112 each contribute to the tRNA site.

Belongs to the PTH family. In terms of assembly, monomer.

It is found in the cytoplasm. It catalyses the reaction an N-acyl-L-alpha-aminoacyl-tRNA + H2O = an N-acyl-L-amino acid + a tRNA + H(+). Its function is as follows. Hydrolyzes ribosome-free peptidyl-tRNAs (with 1 or more amino acids incorporated), which drop off the ribosome during protein synthesis, or as a result of ribosome stalling. In terms of biological role, catalyzes the release of premature peptidyl moieties from peptidyl-tRNA molecules trapped in stalled 50S ribosomal subunits, and thus maintains levels of free tRNAs and 50S ribosomes. This is Peptidyl-tRNA hydrolase from Geobacillus thermodenitrificans (strain NG80-2).